Here is a 575-residue protein sequence, read N- to C-terminus: Melatonin-related receptor (575 aa).

The Extracellular portion of the chain corresponds to 1 to 30 (MGRTLAVPTPYGCIGCKLPQPDYPPALIVF). Residues 31-51 (MFCAMVITIVVDLIGNSMVIL) traverse the membrane as a helical segment. The Cytoplasmic portion of the chain corresponds to 52-64 (AVSKNKKLRNSGN). A helical membrane pass occupies residues 65 to 85 (VFVVSLSVADMLVAIYPYPLM). Residues 86–103 (LHAMAIGGWDLSKLQCQM) lie on the Extracellular side of the membrane. Cys-101 and Cys-178 are joined by a disulfide. A helical membrane pass occupies residues 104–124 (VGFITGLSVVGSIFNIMAIAI). Topologically, residues 125 to 143 (NRYCYICHSLQYERIFSVR) are cytoplasmic. A helical transmembrane segment spans residues 144–164 (NTCIYLAVTWIMTVLAVLPNM). Residues 165-188 (YIGTIEYDPRTYTCIFNYVNNPAF) are Extracellular-facing. The chain crosses the membrane as a helical span at residues 189–209 (AVTIVCIHFVLPLLIVGFCYV). The Cytoplasmic portion of the chain corresponds to 210–239 (KIWTKVLAARDPAGQNPDNQLAEVRNFLTM). Residues 240–260 (FVIFLLFAVCWCPINALTVLV) traverse the membrane as a helical segment. The Extracellular portion of the chain corresponds to 261–273 (AVNPKEMAGKIPN). The chain crosses the membrane as a helical span at residues 274 to 294 (WVYLAAYFIAYFNSCLNAVIY). The Cytoplasmic portion of the chain corresponds to 295–575 (GVLNENFRRE…VDADSDEMAV (281 aa)). Disordered regions lie at residues 368-421 (VPLP…TVYP) and 446-474 (SSHPKPITGPSKTAISPATSFPKPTTGYT). Polar residues predominate over residues 455 to 474 (PSKTAISPATSFPKPTTGYT).

Belongs to the G-protein coupled receptor 1 family. In terms of assembly, homodimer, and heterodimer with MTNR1A and MTNR1B. Interacts with KAT5. Interacts with RTN4 isoform A/NOGO-A. Interacts with TGFBR1.

Its subcellular location is the cell membrane. In terms of biological role, g protein-coupled receptor that plays a role in numerous physiological processes including regulation of energy metabolism, neurite outgrowth or cell migration. Promotes self-renewal and neuronal differentiation of neural progenitor cells through activation of the NOTCH and WNT/beta-catenin signaling pathways. Modulates the KAT5-dependent glucocorticoid receptor signaling by modulating KAT5 subcellular compartmentalisation. Also plays a role in the activation TGFBR1 in the absence of TGFBR2 by interfering with FKBP1A binding to TGFBR1, leading to induction of both canonical and non-canonical SMAD signaling pathways resulting in inhibition of proliferation or promotion of migration. The sequence is that of Melatonin-related receptor (GPR50) from Ovis aries (Sheep).